A 109-amino-acid chain; its full sequence is UPF0482 protein ESA_01750 (109 aa).

The N-terminal stretch at Met1–Ala24 is a signal peptide. The segment covering Arg38–Ser55 has biased composition (basic and acidic residues). Residues Arg38–Arg63 form a disordered region.

It belongs to the UPF0482 family.

In Cronobacter sakazakii (strain ATCC BAA-894) (Enterobacter sakazakii), this protein is UPF0482 protein ESA_01750.